A 228-amino-acid chain; its full sequence is Putative elongation factor Tu-like protein (228 aa).

The tr-type G domain maps to 6 to 212 (KPHINVGTIG…LPIREKDNPF (207 aa)). Residues 15–22 (GHVDHGKT) are G1. The segment at 59–63 (GITIS) is G2. The interval 80 to 83 (DCPG) is G3. Positions 135-138 (NKCD) are G4. The interval 173 to 175 (SAV) is G5.

Belongs to the TRAFAC class translation factor GTPase superfamily. Classic translation factor GTPase family. EF-Tu/EF-1A subfamily.

This chain is Putative elongation factor Tu-like protein, found in Ehrlichia ruminantium (strain Welgevonden).